A 564-amino-acid chain; its full sequence is Rhotekin (564 aa).

The residue at position 14 (Arg-14) is an Omega-N-methylarginine. Positions 17–98 (ALEMEFKRGR…LQRRKEAQVL (82 aa)) constitute an REM-1 domain. Phosphoserine is present on residues Ser-30 and Ser-106. Residue Arg-230 is modified to Asymmetric dimethylarginine. Ser-232 carries the phosphoserine modification. Residues 309-416 (QPTASGALRV…WMEALWQLFF (108 aa)) enclose the PH domain. A disordered region spans residues 518-564 (TFSLDAAPADHSLGPSRSVAPLPPQRSPKSRGFYSKSQLGPWLQSPV). Ser-520, Ser-529, and Ser-544 each carry phosphoserine.

In terms of assembly, interacts via its C-terminal region with the TAX1BP3 PDZ domain. This interaction facilitates Rho-mediated activation of the c-Fos serum response element (SRE). Interacts with SEPT9. Specifically binds to GTP-bound RHOA, RHOB and RHOC and inhibits their GTPase activity. In terms of tissue distribution, abundantly expressed in brain and kidney. Weakly expressed in lung, testis, skeletal muscle, heart and thymus.

Mediates Rho signaling to activate NF-kappa-B and may confer increased resistance to apoptosis to cells in gastric tumorigenesis. May play a novel role in the organization of septin structures. This Mus musculus (Mouse) protein is Rhotekin.